The chain runs to 161 residues: Aklanonic acid methyl ester cyclase DauD (161 aa).

Gln106 serves as a coordination point for substrate. The disordered stretch occupies residues 137-161 (WPTPEGWRPCPPPPRRRHDRSTDTP).

Belongs to the polyketide cyclase DnrD family. As to quaternary structure, homotetramer.

It carries out the reaction methyl aklanonate = aklaviketone. It functions in the pathway antibiotic biosynthesis; daunorubicin biosynthesis. The protein operates within antibiotic biosynthesis; carminomycin biosynthesis. Its pathway is antibiotic biosynthesis; rhodomycin biosynthesis. It participates in antibiotic biosynthesis; aclacinomycin biosynthesis. Involved in the biosynthesis of aklavinone which is an important precursor common to the formation of the clinically significant anthracyclines such as carminomycin, daunorubicin (daunomycin), rhodomycin, aclacinomycin T (aklavin) and aclacinomycin A (aclarubicin). These compounds are aromatic polyketide antibiotics that exhibit high cytotoxicity and are widely applied in the chemotherapy of a variety of cancers. Catalyzes the cyclization of aklanonic acid methyl ester to yield aklaviketone. The chain is Aklanonic acid methyl ester cyclase DauD (dauD) from Streptomyces sp. (strain C5).